We begin with the raw amino-acid sequence, 185 residues long: Ribosome-recycling factor (185 aa).

It belongs to the RRF family.

Its subcellular location is the cytoplasm. Functionally, responsible for the release of ribosomes from messenger RNA at the termination of protein biosynthesis. May increase the efficiency of translation by recycling ribosomes from one round of translation to another. The protein is Ribosome-recycling factor of Lacticaseibacillus casei (strain BL23) (Lactobacillus casei).